Consider the following 533-residue polypeptide: GMP synthase [glutamine-hydrolyzing] (533 aa).

Positions 25–215 (SIVIFDFGSQ…VFNICKCHAN (191 aa)) constitute a Glutamine amidotransferase type-1 domain. The active-site Nucleophile is C102. Residues H189 and E191 contribute to the active site. Positions 216–408 (WTMGNYIQES…LGLPDEMIWR (193 aa)) constitute a GMPS ATP-PPase domain. 243 to 249 (SGGVDSA) contacts ATP.

As to quaternary structure, homodimer.

The enzyme catalyses XMP + L-glutamine + ATP + H2O = GMP + L-glutamate + AMP + diphosphate + 2 H(+). The protein operates within purine metabolism; GMP biosynthesis; GMP from XMP (L-Gln route): step 1/1. Functionally, catalyzes the synthesis of GMP from XMP. This is GMP synthase [glutamine-hydrolyzing] from Dehalococcoides mccartyi (strain ATCC BAA-2266 / KCTC 15142 / 195) (Dehalococcoides ethenogenes (strain 195)).